The chain runs to 167 residues: Putative universal stress protein SSP1056 (167 aa).

This sequence belongs to the universal stress protein A family.

It localises to the cytoplasm. In Staphylococcus saprophyticus subsp. saprophyticus (strain ATCC 15305 / DSM 20229 / NCIMB 8711 / NCTC 7292 / S-41), this protein is Putative universal stress protein SSP1056.